The primary structure comprises 2664 residues: Inositol 1,4,5-trisphosphate-gated calcium channel ITPR3 (2664 aa).

At 1–2227 (MSEMSSFLHI…YVEGASTGVL (2227 aa)) the chain is on the cytoplasmic side. 5 consecutive MIR domains span residues 113–173 (GDVV…LRSN), 174–224 (GDNV…INLF), 232–288 (EEVL…VEVV), 295–372 (GGAG…LDPT), and 378–434 (DSFV…IVSV). Positions 266, 268, 269, and 270 each coordinate 1D-myo-inositol 1,4,5-trisphosphate. The interval 320–344 (NPSYKGDASDPKAAGTGAQGRTGRR) is disordered. The 1D-myo-inositol 1,4,5-trisphosphate site is built by Arg503, Lys507, Arg510, Tyr567, Arg568, and Lys569. Arg743 is a binding site for Ca(2+). Phosphoserine is present on residues Ser909 and Ser927. Ca(2+) is bound by residues Glu1115 and Glu1118. Disordered regions lie at residues 1124–1158 (KGAS…GEKS) and 1790–1850 (QQET…VGER). Positions 1792–1805 (ETKSTVAVNMSDLG) are enriched in polar residues. A phosphoserine mark is found at Ser1806, Ser1825, and Ser1827. 2 residues coordinate Ca(2+): Glu1875 and Glu1939. Ala1989, Glu2142, and Lys2145 together coordinate ATP. A helical transmembrane segment spans residues 2228–2248 (GSPLISLLFWILICFSIAALF). The Extracellular portion of the chain corresponds to 2249 to 2256 (TKRYSVRP). Residues 2257–2277 (LIVALILRSIYYLGIGPTLNI) traverse the membrane as a helical segment. Residues 2278–2286 (LGALNLTNK) lie on the Cytoplasmic side of the membrane. A helical transmembrane segment spans residues 2287–2304 (IVFVVSFVGNRGTFIRGY). The Extracellular segment spans residues 2305-2318 (KAMVMDMEFLYHVG). Residues 2319–2339 (YILTSVLGLFAHELFYSILLF) traverse the membrane as a helical segment. Over 2340-2361 (DLIYREETLFNVIKSVTRNGRS) the chain is Cytoplasmic. The chain crosses the membrane as a helical span at residues 2362-2382 (ILLTALLALILVYLFSIVGFL). The Extracellular portion of the chain corresponds to 2383–2489 (FLKDDFILEV…ESLFPARVVY (107 aa)). A disulfide bond links Cys2448 and Cys2454. Residues 2490 to 2510 (DLLFFFIVIIIVLNLIFGVII) form a helical membrane-spanning segment. Residues 2511-2664 (DTFADLRSEK…FVDVQNCMSR (154 aa)) lie on the Cytoplasmic side of the membrane. Positions 2531 and 2532 each coordinate ATP. Residue Cys2531 coordinates Zn(2+). Residues Cys2534 and His2551 each coordinate Zn(2+). Residues Lys2553, His2556, Asn2557, and Met2558 each contribute to the ATP site. Zn(2+) is bound at residue His2556. Thr2574 is a binding site for Ca(2+). Phosphoserine is present on residues Ser2602 and Ser2663.

Belongs to the InsP3 receptor family. In terms of assembly, homotetramer. Homodimer. Interacts with TRPC1, TRPC3 and TRPC4. Interacts with TRPV4. Interacts with SIGMAR1. Interacts with PML and AKT1. Interacts with IRAG2 (via coiled-coil domain). Interacts with CABP1. Interacts with TMBIM4/LFG4. Interacts with CEMIP. Interacts with TESPA1. Interacts with TMEM203. Interacts with BOK; regulates ITPR3 expression. Interacts with BCL2L10. Interacts with CHGA and CHGB. In terms of processing, phosphorylated by AKT1 on serine and/or threonine residues.

The protein localises to the endoplasmic reticulum membrane. It localises to the cytoplasmic vesicle. The protein resides in the secretory vesicle membrane. The catalysed reaction is Ca(2+)(in) = Ca(2+)(out). With respect to regulation, inositol 1,4,5-trisphosphate-gated calcium channel is regulated by cytosolic calcium in a biphasic manner. At low concentrations, cytosolic calcium binds at a high-affinity juxtamembrane domain (JD) calcium binding site, allowing ITPR3 to activate by escaping a low-energy resting state through an ensemble of preactivated states. At high cytosolic calcium concentrations, ITPR3 preferentially enters an inhibited state stabilized by calcium binding at a second, low-affinity cytoplasmic domain (CD) calcium binding site. In terms of biological role, inositol 1,4,5-trisphosphate-gated calcium channel that, upon 1D-myo-inositol 1,4,5-trisphosphate binding, transports calcium from the endoplasmic reticulum lumen to cytoplasm, thus releasing the intracellular calcium and therefore participates in cellular calcium ion homeostasis. 1D-myo-inositol 1,4,5-trisphosphate binds to the ligand-free channel without altering its global conformation, yielding the low-energy resting state, then progresses through resting-to preactivated transitions to the higher energy preactivated state, which increases affinity for calcium, promoting binding of the low basal cytosolic calcium at the juxtamembrane domain (JD) site, favoring the transition through the ensemble of high-energy intermediate states along the trajectory to the fully-open activated state. Upon opening, releases calcium in the cytosol where it can bind to the low-affinity cytoplasmic domain (CD) site and stabilizes the inhibited state to terminate calcium release. The protein is Inositol 1,4,5-trisphosphate-gated calcium channel ITPR3 of Bos taurus (Bovine).